The primary structure comprises 248 residues: Ureidoacrylate amidohydrolase RutB (248 aa).

The active-site Proton acceptor is Asp43. Lys152 is a catalytic residue. The active-site Nucleophile is Cys185.

Belongs to the isochorismatase family. RutB subfamily.

It carries out the reaction (Z)-3-ureidoacrylate + H2O + H(+) = (Z)-3-aminoacrylate + NH4(+) + CO2. The enzyme catalyses (Z)-3-ureidoacrylate + H2O = (Z)-3-aminoacrylate + carbamate + H(+). The catalysed reaction is (Z)-2-methylureidoacrylate + H2O + H(+) = (Z)-2-methylaminoacrylate + NH4(+) + CO2. Functionally, hydrolyzes ureidoacrylate to form aminoacrylate and carbamate. The carbamate hydrolyzes spontaneously, thereby releasing one of the nitrogen atoms of the pyrimidine ring as ammonia and one of its carbon atoms as CO2. This is Ureidoacrylate amidohydrolase RutB from Serratia proteamaculans (strain 568).